We begin with the raw amino-acid sequence, 455 residues long: Zinc finger and BTB domain-containing protein 8A.2 (455 aa).

One can recognise a BTB domain in the interval 24 to 92; sequence CDCHIMIDGH…MYSGKLNLSG (69 aa). 2 C2H2-type zinc fingers span residues 299–321 and 327–350; these read FKCP…LLCH and YPCQ…RTIH.

Its subcellular location is the nucleus. Functionally, may be involved in transcriptional regulation. This Xenopus tropicalis (Western clawed frog) protein is Zinc finger and BTB domain-containing protein 8A.2 (zbtb8a.2).